The chain runs to 209 residues: V-type ATP synthase subunit D 2 (209 aa).

It belongs to the V-ATPase D subunit family.

Functionally, produces ATP from ADP in the presence of a proton gradient across the membrane. The sequence is that of V-type ATP synthase subunit D 2 (atpD2) from Treponema pallidum (strain Nichols).